The primary structure comprises 775 residues: MVYAHNLGFPRIGIKREMKKTVEAYWRGEISQQQLQQQAIELQLTNWKIQAEAGVDLIPVGDFSWYDHVLDMAVRVGAIPSRFKALNSNITDTMFCMARGQAPNGIETSACEMTKWFDTNYHYIVPEFTTNQSFELHHDDLFKSTKLALENNYRAKPVILGPLSFLWLGKCKGESFNKLLLLEKLLPVYAEIFEQLSSLGVEWVQVDEPILVLDLPPEWQQAFLTTYQQLNFFNLKCLLATYFGSLDDNLSLTCQLPVDGLHIDYCRAPDQLDSVLSQLPAEKILSVGIIDGRNIWCNDLNRSLTLLENIQSSLGDRLWVAPSCSLLHVPIDLDQENKLDVELKSWFAFAKQKVAEAAFLTRGLREGRESIGAELKKNEEVIISRKTSKRIHNPNVEKKAASVTERLMRRQHEHSIRKNKQTAQLNLPLFPTTTIGSFPQTSQIRCLRRDYKQGKIDDALYEEKIRQEIAEVIGIQVKLGLDVLVHGELERNDMVEYFGELLDGIAITSNGWVQSYGSRCVKPPIIFGDVSRERPMTLRWIEYAQSLTTKSVKGMLTGPVTILAWSFVRDDQPRSQTAKQIALALRDEVQDLERSGVRVIQIDEPAFRECLPLRKAAWQDYLEWAVKCFRLASCGVKDETQIHTHMCYSEFNDIIEAIAALDADVITIESSRSEMEILKSFEKFAYPNDIGPGIYDIHSPRIPRVAEIEELAVRALQYIPIERLWINPDCGLKTRNWEETKEALSRMVDAAKHLRKAFSSEKTPTIDLELQPAST.

5-methyltetrahydropteroyltri-L-glutamate is bound by residues 16 to 19 (REMK) and K115. L-homocysteine-binding positions include 435-437 (IGS) and E488. L-methionine contacts are provided by residues 435–437 (IGS) and E488. Residues 519–520 (RC) and W565 contribute to the 5-methyltetrahydropteroyltri-L-glutamate site. L-homocysteine is bound at residue D603. An L-methionine-binding site is contributed by D603. Position 609 (E609) interacts with 5-methyltetrahydropteroyltri-L-glutamate. Zn(2+) contacts are provided by H645, C647, and E669. Catalysis depends on H698, which acts as the Proton donor. C730 contributes to the Zn(2+) binding site.

This sequence belongs to the vitamin-B12 independent methionine synthase family. Requires Zn(2+) as cofactor.

It carries out the reaction 5-methyltetrahydropteroyltri-L-glutamate + L-homocysteine = tetrahydropteroyltri-L-glutamate + L-methionine. The protein operates within amino-acid biosynthesis; L-methionine biosynthesis via de novo pathway; L-methionine from L-homocysteine (MetE route): step 1/1. Its function is as follows. Catalyzes the transfer of a methyl group from 5-methyltetrahydrofolate to homocysteine resulting in methionine formation. The protein is 5-methyltetrahydropteroyltriglutamate--homocysteine methyltransferase of Coxiella burnetii (strain RSA 331 / Henzerling II).